Reading from the N-terminus, the 284-residue chain is 4-hydroxybenzoate octaprenyltransferase (284 aa).

Helical transmembrane passes span 18-38, 42-62, 93-113, 136-156, 161-181, 209-229, 233-253, and 264-284; these read PIGT…AAEG, WHVL…GCVI, IILF…MNPL, HLPQ…AWAA, LPWV…AYDT, LIIG…GLHY, QSFY…QHLI, and AFLN…VAFW.

Belongs to the UbiA prenyltransferase family. The cofactor is Mg(2+).

The protein resides in the cell inner membrane. The catalysed reaction is all-trans-octaprenyl diphosphate + 4-hydroxybenzoate = 4-hydroxy-3-(all-trans-octaprenyl)benzoate + diphosphate. The protein operates within cofactor biosynthesis; ubiquinone biosynthesis. Catalyzes the prenylation of para-hydroxybenzoate (PHB) with an all-trans polyprenyl group. Mediates the second step in the final reaction sequence of ubiquinone-8 (UQ-8) biosynthesis, which is the condensation of the polyisoprenoid side chain with PHB, generating the first membrane-bound Q intermediate 3-octaprenyl-4-hydroxybenzoate. The polypeptide is 4-hydroxybenzoate octaprenyltransferase (Vibrio vulnificus (strain CMCP6)).